Reading from the N-terminus, the 448-residue chain is 26S proteasome regulatory subunit 4 homolog (448 aa).

Residues methionine 1–proline 16 show a composition bias toward gly residues. 2 disordered regions span residues methionine 1–arginine 56 and leucine 93–glycine 112. 2 stretches are compositionally biased toward basic and acidic residues: residues glycine 17 to glutamate 33 and leucine 93 to arginine 111. Glycine 234 to threonine 241 lines the ATP pocket.

It belongs to the AAA ATPase family.

It is found in the cytoplasm. The protein resides in the nucleus. Functionally, the 26S proteasome is involved in the ATP-dependent degradation of ubiquitinated proteins. The regulatory (or ATPase) complex confers ATP dependency and substrate specificity to the 26S complex. This Oryza sativa subsp. japonica (Rice) protein is 26S proteasome regulatory subunit 4 homolog (TBP2).